A 277-amino-acid polypeptide reads, in one-letter code: Digeranylgeranylglyceryl phosphate synthase (277 aa).

A run of 7 helical transmembrane segments spans residues 16-36 (ILAG…IPSI), 40-60 (GLVF…NDYF), 101-121 (FLGV…FIYA), 129-149 (FIGN…GALG), 153-173 (VGLA…REIM), 205-225 (IFGV…IGLG), and 257-277 (LKIA…TKGV).

This sequence belongs to the UbiA prenyltransferase family. DGGGP synthase subfamily. Mg(2+) is required as a cofactor.

It is found in the cell membrane. It carries out the reaction sn-3-O-(geranylgeranyl)glycerol 1-phosphate + (2E,6E,10E)-geranylgeranyl diphosphate = 2,3-bis-O-(geranylgeranyl)-sn-glycerol 1-phosphate + diphosphate. It participates in membrane lipid metabolism; glycerophospholipid metabolism. Prenyltransferase that catalyzes the transfer of the geranylgeranyl moiety of geranylgeranyl diphosphate (GGPP) to the C2 hydroxyl of (S)-3-O-geranylgeranylglyceryl phosphate (GGGP). This reaction is the second ether-bond-formation step in the biosynthesis of archaeal membrane lipids. The sequence is that of Digeranylgeranylglyceryl phosphate synthase from Pyrococcus abyssi (strain GE5 / Orsay).